We begin with the raw amino-acid sequence, 218 residues long: Large ribosomal subunit protein uL4 (218 aa).

Positions 46 to 100 are disordered; it reads ARQGTHSTKTRAEVRGGGRKPFRQKGTGRARQGSIRAPHFTGGGISHGPKPRDYA. The span at 62–73 shows a compositional bias: basic residues; the sequence is GGRKPFRQKGTG.

Belongs to the universal ribosomal protein uL4 family. Part of the 50S ribosomal subunit.

Its function is as follows. One of the primary rRNA binding proteins, this protein initially binds near the 5'-end of the 23S rRNA. It is important during the early stages of 50S assembly. It makes multiple contacts with different domains of the 23S rRNA in the assembled 50S subunit and ribosome. Forms part of the polypeptide exit tunnel. This Corynebacterium efficiens (strain DSM 44549 / YS-314 / AJ 12310 / JCM 11189 / NBRC 100395) protein is Large ribosomal subunit protein uL4.